Reading from the N-terminus, the 356-residue chain is AT-hook motif nuclear-localized protein 1 (356 aa).

The interval 1–127 is disordered; that stretch reads MVLNMESTGE…PSHLPPPSSH (127 aa). A compositionally biased stretch (pro residues) spans 49-66; that stretch reads VTPPPPQPSSHHTAPPPL. Residues 88–97 show a composition bias toward basic residues; the sequence is MKKKRGRPRK. Positions 89–97 match the Bipartite nuclear localization signal motif; that stretch reads KKKRGRPRK. The segment at residues 89 to 101 is a DNA-binding region (a.T hook); sequence KKKRGRPRKYGPD. Over residues 106-118 the composition is skewed to low complexity; sequence ALSPKPISSAPAP. The region spanning 167–309 is the PPC domain; the sequence is GGNFTPHIIT…KHDFMLSSPT (143 aa). A required for nuclear localization region spans residues 270–287; the sequence is GLLVAASPVQVVVGSFLA. The Nuclear localization signal signature appears at 295 to 302; that stretch reads KPKKNKHD.

It localises to the nucleus. Its subcellular location is the nucleoplasm. The protein localises to the chromosome. Transcription factor that specifically binds AT-rich DNA sequences related to the nuclear matrix attachment regions (MARs). May play a function in the positioning of chromatin fibers within the nucleus. In Arabidopsis thaliana (Mouse-ear cress), this protein is AT-hook motif nuclear-localized protein 1.